The following is a 431-amino-acid chain: Glutamyl-tRNA(Gln) amidotransferase subunit A (431 aa).

Residues lysine 55 and serine 130 each act as charge relay system in the active site. Serine 154 (acyl-ester intermediate) is an active-site residue.

It belongs to the amidase family. GatA subfamily. As to quaternary structure, heterotrimer of A, B and C subunits.

It catalyses the reaction L-glutamyl-tRNA(Gln) + L-glutamine + ATP + H2O = L-glutaminyl-tRNA(Gln) + L-glutamate + ADP + phosphate + H(+). Its function is as follows. Allows the formation of correctly charged Gln-tRNA(Gln) through the transamidation of misacylated Glu-tRNA(Gln) in organisms which lack glutaminyl-tRNA synthetase. The reaction takes place in the presence of glutamine and ATP through an activated gamma-phospho-Glu-tRNA(Gln). This chain is Glutamyl-tRNA(Gln) amidotransferase subunit A, found in Methanococcus maripaludis (strain DSM 14266 / JCM 13030 / NBRC 101832 / S2 / LL).